The following is a 134-amino-acid chain: ATP synthase epsilon chain (134 aa).

The protein belongs to the ATPase epsilon chain family. In terms of assembly, F-type ATPases have 2 components, CF(1) - the catalytic core - and CF(0) - the membrane proton channel. CF(1) has five subunits: alpha(3), beta(3), gamma(1), delta(1), epsilon(1). CF(0) has three main subunits: a, b and c.

It localises to the cellular thylakoid membrane. Produces ATP from ADP in the presence of a proton gradient across the membrane. The sequence is that of ATP synthase epsilon chain from Prochlorococcus marinus (strain MIT 9312).